A 166-amino-acid chain; its full sequence is Ribosome maturation factor RimM (166 aa).

Residues 90-163 form the PRC barrel domain; the sequence is EGQYFIKDII…KIVIKAVEEW (74 aa).

Belongs to the RimM family. As to quaternary structure, binds ribosomal protein uS19.

It localises to the cytoplasm. Functionally, an accessory protein needed during the final step in the assembly of 30S ribosomal subunit, possibly for assembly of the head region. Essential for efficient processing of 16S rRNA. May be needed both before and after RbfA during the maturation of 16S rRNA. It has affinity for free ribosomal 30S subunits but not for 70S ribosomes. This chain is Ribosome maturation factor RimM, found in Clostridium acetobutylicum (strain ATCC 824 / DSM 792 / JCM 1419 / IAM 19013 / LMG 5710 / NBRC 13948 / NRRL B-527 / VKM B-1787 / 2291 / W).